The primary structure comprises 305 residues: Small ribosomal subunit biogenesis GTPase RsgA (305 aa).

The region spanning 67 to 224 (SSELVRPAVA…VADTPGFSSF (158 aa)) is the CP-type G domain. GTP is bound by residues 116-119 (NKID) and 166-174 (GQSGVGKST). Residues C248, C253, H255, and C261 each contribute to the Zn(2+) site.

It belongs to the TRAFAC class YlqF/YawG GTPase family. RsgA subfamily. As to quaternary structure, monomer. Associates with 30S ribosomal subunit, binds 16S rRNA. The cofactor is Zn(2+).

The protein resides in the cytoplasm. Its function is as follows. One of several proteins that assist in the late maturation steps of the functional core of the 30S ribosomal subunit. Helps release RbfA from mature subunits. May play a role in the assembly of ribosomal proteins into the subunit. Circularly permuted GTPase that catalyzes slow GTP hydrolysis, GTPase activity is stimulated by the 30S ribosomal subunit. The sequence is that of Small ribosomal subunit biogenesis GTPase RsgA from Ruminiclostridium cellulolyticum (strain ATCC 35319 / DSM 5812 / JCM 6584 / H10) (Clostridium cellulolyticum).